Reading from the N-terminus, the 444-residue chain is Putative GTP cyclohydrolase URC1 (444 aa).

Position 268–272 (268–272) interacts with GTP; the sequence is RVHDE. Residues Cys-273, Cys-284, and Cys-286 each contribute to the Zn(2+) site. 315-317 contacts GTP; that stretch reads EGR. Asp-353 acts as the Proton acceptor in catalysis. The Nucleophile role is filled by Arg-355. GTP is bound by residues Ser-377 and Lys-382.

Belongs to the GTP cyclohydrolase II family.

The protein resides in the cytoplasm. The protein localises to the nucleus. Involved in uracil catabolism. The chain is Putative GTP cyclohydrolase URC1 (URC1) from Lachancea kluyveri (Yeast).